The chain runs to 115 residues: Large ribosomal subunit protein bL20 (115 aa).

This sequence belongs to the bacterial ribosomal protein bL20 family.

Functionally, binds directly to 23S ribosomal RNA and is necessary for the in vitro assembly process of the 50S ribosomal subunit. It is not involved in the protein synthesizing functions of that subunit. The chain is Large ribosomal subunit protein bL20 from Salinibacter ruber (strain DSM 13855 / M31).